Reading from the N-terminus, the 725-residue chain is Homeobox protein unc-62 (725 aa).

The MEIS N-terminal domain maps to 133–218 (SSDVCSSASF…PLDIVGDERA (86 aa)). 6 disordered regions span residues 214-258 (GDER…PYEP), 295-317 (SSSSSQPQPGDHPLANGGTLHST), 329-359 (VSSPSTCSSGGLRQDSTPLSGETPMANGNSM), 386-419 (SLHQHHLHHPHHFPHHQLQPPAHHQDFLLPPPPQ), 491-555 (VKME…KRKV), and 615-661 (IDQN…PDPT). Residues 219-239 (SSSQPPMSPGSMGHHGHSGSP) are compositionally biased toward low complexity. Positions 388-400 (HQHHLHHPHHFPH) are enriched in basic residues. Residues 498 to 508 (SVSSSKSGGKK) show a composition bias toward low complexity. The segment covering 541–550 (LSDSANGSQN) has biased composition (polar residues). A DNA-binding region (homeobox; TALE-type) is located at residues 552 to 614 (KRKVPKVFSK…NARRRIVQPM (63 aa)).

Belongs to the TALE/MEIS homeobox family.

Its subcellular location is the nucleus. In terms of biological role, acts redundantly with ceh-20 and ceh-40 to perform overlapping roles during embryogenesis. Required for postembryonic development of the ectoderm, including the Q, V and P cell lineages, playing a crucial role in ensuring that these cells and their descendants undergo their invariant patterns of cell division, migration, fusion and morphogenesis. Has a role in the mig-13 pathway to promote anterior migration of neuroblasts in the Q lineage. Required for multiple roles in regulating vulva development. In Caenorhabditis briggsae, this protein is Homeobox protein unc-62 (unc-62).